Here is a 442-residue protein sequence, read N- to C-terminus: tRNA-2-methylthio-N(6)-dimethylallyladenosine synthase (442 aa).

Residues 2 to 120 (KKVFIRTFGC…LPKMIVDKET (119 aa)) enclose the MTTase N-terminal domain. Residues C11, C49, C83, C157, C161, and C164 each contribute to the [4Fe-4S] cluster site. One can recognise a Radical SAM core domain in the interval 143–375 (RVEGGAAFVS…NEVIEAETAR (233 aa)). In terms of domain architecture, TRAM spans 378-441 (QTMIGTVQRC…TFSLRGKIVE (64 aa)).

It belongs to the methylthiotransferase family. MiaB subfamily. Monomer. It depends on [4Fe-4S] cluster as a cofactor.

The protein resides in the cytoplasm. It carries out the reaction N(6)-dimethylallyladenosine(37) in tRNA + (sulfur carrier)-SH + AH2 + 2 S-adenosyl-L-methionine = 2-methylsulfanyl-N(6)-dimethylallyladenosine(37) in tRNA + (sulfur carrier)-H + 5'-deoxyadenosine + L-methionine + A + S-adenosyl-L-homocysteine + 2 H(+). Catalyzes the methylthiolation of N6-(dimethylallyl)adenosine (i(6)A), leading to the formation of 2-methylthio-N6-(dimethylallyl)adenosine (ms(2)i(6)A) at position 37 in tRNAs that read codons beginning with uridine. This Neisseria gonorrhoeae (strain ATCC 700825 / FA 1090) protein is tRNA-2-methylthio-N(6)-dimethylallyladenosine synthase.